Consider the following 368-residue polypeptide: Aminomethyltransferase (368 aa).

It belongs to the GcvT family. The glycine cleavage system is composed of four proteins: P, T, L and H.

The catalysed reaction is N(6)-[(R)-S(8)-aminomethyldihydrolipoyl]-L-lysyl-[protein] + (6S)-5,6,7,8-tetrahydrofolate = N(6)-[(R)-dihydrolipoyl]-L-lysyl-[protein] + (6R)-5,10-methylene-5,6,7,8-tetrahydrofolate + NH4(+). Functionally, the glycine cleavage system catalyzes the degradation of glycine. This is Aminomethyltransferase from Thermoanaerobacter pseudethanolicus (strain ATCC 33223 / 39E) (Clostridium thermohydrosulfuricum).